A 727-amino-acid chain; its full sequence is Prolyl endopeptidase-like (727 aa).

Position 1 is an N-acetylmethionine (M1). Residues S559, D645, and H690 each act as charge relay system in the active site.

It belongs to the peptidase S9A family. Homodimer. Interacts with the AP-1 complex. As to expression, expressed in pyramidal neurons of the temporal cortex and neocortex (at protein level). Widely expressed. Expressed at higher level in brain, skeletal muscle, heart and kidney. Expressed at the endplates in the neuromuscular junction.

It is found in the cytoplasm. Its subcellular location is the cytosol. The protein localises to the golgi apparatus. It localises to the trans-Golgi network. The protein resides in the cytoskeleton. It is found in the nucleus. Its activity is regulated as follows. Inhibited by PMSF and Prefabloc, as well as leupeptin at high concentrations. Partially inhibited by TPCK, a chymotrypsin inhibitor and E64, a cysteine protease inhibitor. Not affected by 4-amidinophenyl-methanesulfonyl fluoride (APMSF), pepstatin or EDTA. Inhibited by 1-isobutyl-3-oxo-3,5,6,7-tetrahydro-2H-cyclopenta[c]pyridine-4-carbonitrile. In terms of biological role, serine peptidase whose precise substrate specificity remains unclear. Does not cleave peptides after a arginine or lysine residue. Regulates trans-Golgi network morphology and sorting by regulating the membrane binding of the AP-1 complex. May play a role in the regulation of synaptic vesicle exocytosis. This is Prolyl endopeptidase-like (PREPL) from Homo sapiens (Human).